The primary structure comprises 763 residues: ATP-dependent RNA helicase glh-1 (763 aa).

The segment at 1–30 (MSDGWSDSESAAKAKTGFGSGGGFGGGNNG) is disordered. Residues 18–30 (FGSGGGFGGGNNG) show a composition bias toward gly residues. 7 consecutive repeat copies span residues 24–33 (FGGGNNGGSG), 34–43 (FGGGKNGGTG), 44–53 (FGGGNTGGSG), 54–63 (FGGGNTGGSG), 64–73 (FGGGKTGGSG), 74–83 (FGGGNTCGSG), and 84–93 (FGGGSTGGSP). A 7 X 10 AA tandem repeats, Gly-rich region spans residues 24–93 (FGGGNNGGSG…FGGGSTGGSP (70 aa)). CCHC-type zinc fingers lie at residues 158 to 175 (NNCFNCQQPGHRSSDCPE) and 183 to 200 (RVCYNCQQPGHTSRECTE). Residues 193–230 (HTSRECTEERKPREGRTGGFGGGAGFGNNGGNDGFGGD) are disordered. Over residues 194–208 (TSRECTEERKPREGR) the composition is skewed to basic and acidic residues. Over residues 209 to 230 (TGGFGGGAGFGNNGGNDGFGGD) the composition is skewed to gly residues. CCHC-type zinc fingers lie at residues 242–259 (MKCFNCKGEGHRSAECPE) and 262–279 (RGCFNCGEQGHRSNECPN). The Q motif signature appears at 341–369 (KTFAEANLTETMQKNVAHAGYSKTTPIQQ). Residues 372 to 556 (LPLVHQGYDI…RAFLRENYVM (185 aa)) enclose the Helicase ATP-binding domain. An ATP-binding site is contributed by 385–392 (AQTGSGKT). The Phosphodegron motif lies at 423-427 (ILTPT). Residues 499–502 (DEAD) carry the DEAD box motif. In terms of domain architecture, Helicase C-terminal spans 592–739 (DIDSYTTEKS…IVPDWMQGAA (148 aa)).

Belongs to the DEAD box helicase family. DDX4/VASA subfamily. Interacts with csn-5; this may prevent glh-1 degradation induced by kgb-1. Interacts with zyx-1. Interacts (via the N-terminal region containing the four CCHC zinc fingers) with pan-1. Interacts with kgb-1; this may promote glh-1 degradation by the proteasome. In terms of processing, phosphorylated by kgb-1 (in vitro); this may be responsible for its degradation by the proteasome.

The protein resides in the cytoplasm. It is found in the cytoplasmic granule. The protein localises to the perinuclear region. The enzyme catalyses ATP + H2O = ADP + phosphate + H(+). Functionally, probable ATP-binding RNA helicase. May act redundantly with the P-granule component glh-4 to regulate the formation of the granular structure of P-granules in embryos. Plays a role in positively regulating the localization of pgl-1 to P-granules. May play a role in transgenerational epigenetic inheritance. May protect somatic cells from excessive apoptosis during normal development. The chain is ATP-dependent RNA helicase glh-1 from Caenorhabditis elegans.